Here is a 486-residue protein sequence, read N- to C-terminus: Hematopoietic lineage cell-specific protein (486 aa).

Positions 27-66 (FVNDISEKEQRWGAKTIEGSGRTEHINIHQLRNKVSEEHD) are involved in HAX-1 binding. The residue at position 41 (Lys41) is an N6-acetyllysine. 3 Cortactin repeats span residues 79–115 (ASHG…SQTD), 116–152 (AARG…SQKD), and 153–189 (YSHG…SQRD). The residue at position 123 (Lys123) is an N6-acetyllysine. Tyr140 bears the Phosphotyrosine mark. The stretch at 190 to 212 (YAKGFGGQYGIQKDRVDKSAVGF) is one Cortactin 4; truncated repeat. Lys192 carries the N6-acetyllysine modification. Tyr198 bears the Phosphotyrosine mark. Tyr222 carries the phosphotyrosine; by FGR modification. The tract at residues 226–430 (TPIEAASSGA…AGPSAGAGGA (205 aa)) is disordered. Basic and acidic residues-rich tracts occupy residues 240–258 (AKFE…EEKA) and 265–276 (QQERKAVVKMSR). Residue Lys241 is modified to N6-acetyllysine. The residue at position 275 (Ser275) is a Phosphoserine. At Thr330 the chain carries Phosphothreonine. Ser333 is modified (phosphoserine). Positions 358–367 (VVEEPVYEAA) are enriched in low complexity. A compositionally biased stretch (acidic residues) spans 368-413 (PELEPEPEPDYEPEPETEPDYEDVGELDRQDEDAEGDYEDVLEPED). Residues Tyr388 and Tyr405 each carry the phosphotyrosine; by SYK and FES modification. Positions 429-486 (GAGISAIALYDYQGEGSDELSFDPDDIITDIEMVDEGWWRGQCRGHFGLFPANYVKLL) constitute an SH3 domain.

As to quaternary structure, interacts (via SH2 domain) with FGR. Associates with the SH2 and SH3 domains of LCK. Binding to he LCK SH3 domain occurs constitutively, while binding to the LCK SH2 domain occurs only upon TCR stimulation. A similar binding pattern was observed with LYN, but not with FYN in which the FYN SH2 region associates upon TCR stimulation but the FYN SH3 region does not associate regardless of TCR stimulation. Directly associates with HAX1, through binding to its C-terminal region. Interacts with HS1BP3. Interacts with FES/FPS. Forms a multiprotein complex with LYN and ANKRD54. Phosphorylated by LYN, FYN and FGR after cross-linking of surface IgM on B-cells. Phosphorylation by LYN, FYN and FGR requires prior phosphorylation by SYK. Binds to LCK in vivo, and is tyrosine phosphorylated upon TCR stimulation. Phosphorylated by FES. In terms of tissue distribution, expressed only in tissues and cells of hematopoietic origin.

It is found in the mitochondrion. Substrate of the antigen receptor-coupled tyrosine kinase. Plays a role in antigen receptor signaling for both clonal expansion and deletion in lymphoid cells. May also be involved in the regulation of gene expression. In Mus musculus (Mouse), this protein is Hematopoietic lineage cell-specific protein (Hcls1).